A 201-amino-acid polypeptide reads, in one-letter code: Ribosomal RNA small subunit methyltransferase G (201 aa).

Residues Gly-71, Phe-76, Leu-120 to Glu-121, and Arg-134 contribute to the S-adenosyl-L-methionine site.

The protein belongs to the methyltransferase superfamily. RNA methyltransferase RsmG family.

It localises to the cytoplasm. It carries out the reaction guanosine(527) in 16S rRNA + S-adenosyl-L-methionine = N(7)-methylguanosine(527) in 16S rRNA + S-adenosyl-L-homocysteine. Functionally, specifically methylates the N7 position of guanine in position 527 of 16S rRNA. In Rhodospirillum rubrum (strain ATCC 11170 / ATH 1.1.1 / DSM 467 / LMG 4362 / NCIMB 8255 / S1), this protein is Ribosomal RNA small subunit methyltransferase G.